A 446-amino-acid chain; its full sequence is Probable D-serine dehydratase (446 aa).

Lys-116 bears the N6-(pyridoxal phosphate)lysine mark.

Belongs to the serine/threonine dehydratase family. DsdA subfamily. Pyridoxal 5'-phosphate is required as a cofactor.

It catalyses the reaction D-serine = pyruvate + NH4(+). The protein is Probable D-serine dehydratase of Bacillus cereus (strain 03BB102).